The sequence spans 1010 residues: Lysosomal alpha-mannosidase (1010 aa).

Residues M1–G22 form the signal peptide. Positions K23–T40 are cleaved as a propeptide — pro I. Residues H51 and D53 each coordinate Zn(2+). N68 carries an N-linked (GlcNAc...) asparagine glycan. Zn(2+) is bound by residues D173 and H420. D173 serves as the catalytic Nucleophile. 10 N-linked (GlcNAc...) asparagine glycosylation sites follow: N480, N520, N528, N539, N623, N760, N784, N828, N954, and N963. A propeptide spans R508–S595 (pro II).

Belongs to the glycosyl hydrolase 38 family. As to quaternary structure, tetramer of equimolar amounts of 60 and 58 kDa subunits. Zn(2+) is required as a cofactor. In terms of processing, first cleaved into the mature 58 kDa subunit and an intermediate 82 kDa subunit. The latter is then cleaved to its mature 60 kDa subunit form. These events occur in multiple intracellular compartments. The 60 kDa subunit may form one or more intramolecular disulfide bonds.

The protein localises to the lysosome. The catalysed reaction is Hydrolysis of terminal, non-reducing alpha-D-mannose residues in alpha-D-mannosides.. This chain is Lysosomal alpha-mannosidase (manA), found in Dictyostelium discoideum (Social amoeba).